The primary structure comprises 131 residues: Small ribosomal subunit protein bS6 (131 aa).

Residues Val-96–Glu-131 form a disordered region. The span at Lys-104–Asp-122 shows a compositional bias: basic and acidic residues.

It belongs to the bacterial ribosomal protein bS6 family.

Its function is as follows. Binds together with bS18 to 16S ribosomal RNA. The protein is Small ribosomal subunit protein bS6 of Shewanella sp. (strain ANA-3).